We begin with the raw amino-acid sequence, 289 residues long: ATP synthase gamma chain (289 aa).

Belongs to the ATPase gamma chain family. F-type ATPases have 2 components, CF(1) - the catalytic core - and CF(0) - the membrane proton channel. CF(1) has five subunits: alpha(3), beta(3), gamma(1), delta(1), epsilon(1). CF(0) has three main subunits: a, b and c.

Its subcellular location is the cell inner membrane. Produces ATP from ADP in the presence of a proton gradient across the membrane. The gamma chain is believed to be important in regulating ATPase activity and the flow of protons through the CF(0) complex. This Anaeromyxobacter dehalogenans (strain 2CP-C) protein is ATP synthase gamma chain.